A 449-amino-acid polypeptide reads, in one-letter code: Signal recognition particle protein (449 aa).

GTP contacts are provided by residues 109-116, 191-195, and 249-252; these read GLQGGGKT, DTAGR, and SRID.

Belongs to the GTP-binding SRP family. SRP54 subfamily. As to quaternary structure, part of the signal recognition particle protein translocation system, which is composed of SRP and FtsY. SRP is a ribonucleoprotein composed of Ffh and a 4.5S RNA molecule.

It is found in the cytoplasm. The catalysed reaction is GTP + H2O = GDP + phosphate + H(+). Its function is as follows. Involved in targeting and insertion of nascent membrane proteins into the cytoplasmic membrane. Binds to the hydrophobic signal sequence of the ribosome-nascent chain (RNC) as it emerges from the ribosomes. The SRP-RNC complex is then targeted to the cytoplasmic membrane where it interacts with the SRP receptor FtsY. Interaction with FtsY leads to the transfer of the RNC complex to the Sec translocase for insertion into the membrane, the hydrolysis of GTP by both Ffh and FtsY, and the dissociation of the SRP-FtsY complex into the individual components. This Rickettsia typhi (strain ATCC VR-144 / Wilmington) protein is Signal recognition particle protein.